The chain runs to 216 residues: Transmembrane protein 186 (216 aa).

At 1 to 68 (MAFLLRVVPR…IYRFRAIRAI (68 aa)) the chain is on the mitochondrial matrix side. The segment at 31–52 (GDSKRWVGSRSPHSREKSPGTE) is disordered. A helical transmembrane segment spans residues 69–91 (GFLSRLKLAQTAVTVVALPPGFY). At 92–103 (CYSQGLMTLSSL) the chain is on the mitochondrial intermembrane side. The chain crosses the membrane as a helical span at residues 104–124 (CLLGGVASFALAMLCWMSHFF). At 125 to 216 (RRLVGILYVN…GTLATLKNSK (92 aa)) the chain is on the mitochondrial matrix side.

The protein belongs to the TMEM186 family. In terms of assembly, part of the mitochondrial complex I assembly/MCIA complex that comprises at least the core subunits TMEM126B, NDUFAF1, ECSIT and ACAD9 and complement subunits such as COA1 and TMEM186. Interacts with MT-ND3.

The protein resides in the mitochondrion inner membrane. In terms of biological role, as part of the MCIA complex, required for efficient assembly of the mitochondrial complex I. The protein is Transmembrane protein 186 of Mus musculus (Mouse).